Consider the following 225-residue polypeptide: Orotate phosphoribosyltransferase (225 aa).

Position 31 (Lys31) interacts with 5-phospho-alpha-D-ribose 1-diphosphate. An orotate-binding site is contributed by 39-40; the sequence is FF. 5-phospho-alpha-D-ribose 1-diphosphate-binding positions include 78–79, Arg105, Lys106, Lys109, His111, and 130–138; these read YK and DDVLTSGKA. The orotate site is built by Thr134 and Arg163.

Belongs to the purine/pyrimidine phosphoribosyltransferase family. PyrE subfamily. Homodimer.

The enzyme catalyses orotidine 5'-phosphate + diphosphate = orotate + 5-phospho-alpha-D-ribose 1-diphosphate. Its pathway is pyrimidine metabolism; UMP biosynthesis via de novo pathway; UMP from orotate: step 1/2. Catalyzes the transfer of a ribosyl phosphate group from 5-phosphoribose 1-diphosphate to orotate, leading to the formation of orotidine monophosphate (OMP). The polypeptide is Orotate phosphoribosyltransferase (URA5) (Cryptococcus neoformans var. grubii serotype A (strain H99 / ATCC 208821 / CBS 10515 / FGSC 9487) (Filobasidiella neoformans var. grubii)).